The sequence spans 208 residues: Mitochondrial import inner membrane translocase subunit Tim23 (208 aa).

Transmembrane regions (helical) follow at residues 73–93, 125–145, and 173–193; these read FELA…FGTL, ASWA…GVAI, and GLKG…LYAL.

This sequence belongs to the Tim17/Tim22/Tim23 family. As to quaternary structure, component of the TIM23 complex at least composed of timm23, timm17 and timm50. The complex interacts with the timm44 component of the PAM complex.

It localises to the mitochondrion inner membrane. Functionally, essential component of the TIM23 complex, a complex that mediates the translocation of transit peptide-containing proteins across the mitochondrial inner membrane. Plays an essential role in early embryonic development. The polypeptide is Mitochondrial import inner membrane translocase subunit Tim23 (timm23) (Danio rerio (Zebrafish)).